Here is a 73-residue protein sequence, read N- to C-terminus: Beta-defensin 10 (73 aa).

Positions 1-23 (MRTLCSLLLICCLLFSYTTPAVG) are cleaved as a signal peptide. Intrachain disulfides connect Cys-37–Cys-66, Cys-44–Cys-59, and Cys-49–Cys-67.

It belongs to the beta-defensin family. As to expression, expressed in both adult and neonate brain, and very weakly in kidneys, epididymis, and testis.

It is found in the secreted. In terms of biological role, has antibacterial activity. In Mus musculus (Mouse), this protein is Beta-defensin 10 (Defb10).